A 490-amino-acid polypeptide reads, in one-letter code: MEESLWVVTATVVVVFAIAKLLKKSSSISTMEWPKGPKKLPIIGNLHQLGGEAFHVVLANLAKIHGTVMTIWVGAWRPMIVISDIDKAWEVLVNKSSDYAGRDFPEITKIISANWKNISCSDSGPFWQNLRKGLQGGALAPLNVISQYQLQERDMKNLITSMQEKASKNNGILKPLDYLKEETIRLLSRLIFGQSFNDENFVKGVHLALDDLVRISGYASLADAFKFCENLPSHKKSIREVHEVNERVVNLVKPYLVKNPPTNTYLYFLNSQKFSDEVIISAVLEVYDLGVDSTASTAVWALTFLVREPRVQEKLYKEIIDLTGGERSVKVEDVSKLPYLQAVMKETMRMKPIAPMAIPHKTSRDTSLMGKKVNKGTSIMVNLYAIHHNPKVFPEPYKFIPERFLQGQESKYGDIKEMEQSLLPFSAGMRICAGMELGKLQYGFSLASLVEAFKWTCAVDGKLPDLSEDHCFILLMKNPLEARITPRTQL.

The helical transmembrane segment at 2–22 threads the bilayer; sequence EESLWVVTATVVVVFAIAKLL. Cysteine 432 is a heme binding site.

Belongs to the cytochrome P450 family. Heme serves as cofactor. Expressed in roots. Detected in leaves and stems.

The protein localises to the endoplasmic reticulum membrane. It carries out the reaction (S)-scoulerine + reduced [NADPH--hemoprotein reductase] + O2 = (S)-cheilanthifoline + oxidized [NADPH--hemoprotein reductase] + 2 H2O + H(+). It participates in alkaloid biosynthesis. Its function is as follows. Methylenedioxy bridge-forming cytochrome P450 involved in the biosynthesis of isoquinoline alkaloids. Converts (S)-scoulerine into (R,S)-cheilanthifoline. Catalyzes an oxidative reaction that does not incorporate oxygen into the product. This Eschscholzia californica (California poppy) protein is Cheilanthifoline synthase (CYP719A5).